We begin with the raw amino-acid sequence, 187 residues long: UPF0301 protein YqgE (187 aa).

The protein belongs to the UPF0301 (AlgH) family.

In Salmonella agona (strain SL483), this protein is UPF0301 protein YqgE.